Here is a 416-residue protein sequence, read N- to C-terminus: Ribosome biogenesis protein WDR12 homolog (416 aa).

The ubiquitin-like (UBL) domain stretch occupies residues 7–89 (VQVRFFTKQK…ESVVEIEYLE (83 aa)). WD repeat units follow at residues 101 to 138 (VHDDWVSSVSRCKNCIITGSYDNCVQIWDDQGSCLAKV), 140 to 184 (GHTS…ASCV), 189 to 228 (GHTQSVDSISINPSATKFCSGSWDKTLKLWSAVVNPEGGD), 259 to 297 (GHTQAVSSVVWMDRTTICSAGWDHCIRLWDAESGVNKQT), 299 to 338 (TGSKVFCEIAYSALNQCLASGSADKYIRLWDHRAEDGQVV), 344 to 384 (SHQG…TPLY), and 388 to 416 (GHQDKVMCVRWSSSRHLMSGGTDNQLILY). The segment at 226–245 (GGDEGENGSLSKKQKTTGVK) is disordered.

Belongs to the WD repeat WDR12/YTM1 family.

The protein localises to the nucleus. It localises to the nucleolus. The protein resides in the nucleoplasm. Required for maturation of ribosomal RNAs and formation of the large ribosomal subunit. This Nematostella vectensis (Starlet sea anemone) protein is Ribosome biogenesis protein WDR12 homolog.